We begin with the raw amino-acid sequence, 126 residues long: Histone H2B 1.1 (126 aa).

The segment covering 1–12 has biased composition (low complexity); it reads MPEPAKSAPAPK. Residues 1–35 are disordered; it reads MPEPAKSAPAPKKGSKKAVTKTQKKDGKKRRKSRK. K6 and K13 each carry N6-acetyllysine. S15 is modified (phosphoserine). N6-acetyllysine occurs at positions 16 and 21. O-linked (GlcNAc) serine glycosylation occurs at S113. A Glycyl lysine isopeptide (Lys-Gly) (interchain with G-Cter in ubiquitin) cross-link involves residue K121.

Belongs to the histone H2B family. The nucleosome is a histone octamer containing two molecules each of H2A, H2B, H3 and H4 assembled in one H3-H4 heterotetramer and two H2A-H2B heterodimers. The octamer wraps approximately 147 bp of DNA. In terms of processing, monoubiquitination of Lys-121 by BRE1 gives a specific tag for epigenetic transcriptional activation and is also prerequisite for histone H3 'Lys-4' and 'Lys-79' methylation. Post-translationally, phosphorylated on Ser-15 during developmentally programmed apoptosis; which may facilitate apoptotic chromatin condensation. GlcNAcylation at Ser-113 promotes monoubiquitination of Lys-121. It fluctuates in response to extracellular glucose, and associates with transcribed genes.

Its subcellular location is the nucleus. The protein resides in the chromosome. Core component of nucleosome. Nucleosomes wrap and compact DNA into chromatin, limiting DNA accessibility to the cellular machineries which require DNA as a template. Histones thereby play a central role in transcription regulation, DNA repair, DNA replication and chromosomal stability. DNA accessibility is regulated via a complex set of post-translational modifications of histones, also called histone code, and nucleosome remodeling. This is Histone H2B 1.1 from Xenopus laevis (African clawed frog).